We begin with the raw amino-acid sequence, 303 residues long: Probable WRKY transcription factor 30 (303 aa).

The tract at residues 65 to 92 is disordered; that stretch reads DQVSQGGGSPKSDDSDQEPLVIKSSKKS. Residues 107–175 constitute a DNA-binding region (WRKY); sequence GVDRTLDDGF…YRGIHSCSQA (69 aa). Residues 266 to 278 show a composition bias toward low complexity; sequence SGSASHSASNSPS. The tract at residues 266–291 is disordered; it reads SGSASHSASNSPSTVPLESPFESYDP.

This sequence belongs to the WRKY group III family. As to quaternary structure, interacts with WRKY53, WRKY54 and WRKY70.

It is found in the nucleus. In terms of biological role, transcription factor. Interacts specifically with the W box (5'-(T)TGAC[CT]-3'), a frequently occurring elicitor-responsive cis-acting element. This Arabidopsis thaliana (Mouse-ear cress) protein is Probable WRKY transcription factor 30.